The sequence spans 1225 residues: Catenin delta-2 (1225 aa).

4 disordered regions span residues 1 to 51, 87 to 117, 134 to 242, and 256 to 312; these read MFAR…TSAI, SETG…EDEL, SGIL…HLPD, and SSTL…KSYS. Polar residues-rich tracts occupy residues 20-51 and 98-108; these read QPSS…TSAI and AEEQFQWQSQD. Residues 49 to 84 are a coiled coil; sequence SAILASVKEQELQFERLTRELEAERQIVASQLERCK. The span at 149–160 shows a compositional bias: low complexity; that stretch reads SLLSQSALQLNS. 2 stretches are compositionally biased toward polar residues: residues 172 to 187 and 195 to 209; these read YHSN…TPSQ and ARAT…TTSR. Omega-N-methylarginine is present on arginine 209. A compositionally biased stretch (pro residues) spans 217–229; sequence EPAPPPPPPPREP. Arginine 264 bears the Omega-N-methylarginine mark. Residues serine 267 and serine 276 each carry the phosphoserine modification. Omega-N-methylarginine is present on residues arginine 282 and arginine 296. Residues 299 to 312 are compositionally biased toward polar residues; that stretch reads SPKQSPSRLAKSYS. Phosphoserine is present on residues serine 327, serine 360, serine 415, and serine 461. Residues 394–438 form an ARM 1 repeat; that stretch reads GSRASYSSQHGHLGPELRALQSPEHHIDPIYEDRVYQKPPMRSLS. 2 disordered regions span residues 432 to 483 and 514 to 542; these read PPMR…NAAA and SPYS…QKDP. The span at 469–478 shows a compositional bias: polar residues; sequence LQRTGSQHGP. Serine 514 carries the post-translational modification Phosphoserine. Phosphotyrosine is present on tyrosine 516. ARM repeat units lie at residues 540–579, 582–621, 626–666, 682–724, 728–773, 835–875, 882–921, and 975–1018; these read KDPR…HLCF, NKIK…NLVY, DDNK…NLSS, LTNA…NVSS, EARR…NLSY, PKGI…NLAA, VYIR…NMAL, and MENA…SMWQ. Positions 1042-1077 are disordered; that stretch reads TIERDRQRPYSSSRTPSISPVRVSPNNRSASAPASP. Positions 1050-1059 are enriched in polar residues; the sequence is PYSSSRTPSI. Residues serine 1065 and serine 1076 each carry the phosphoserine modification. The segment covering 1065–1077 has biased composition (low complexity); that stretch reads SPNNRSASAPASP.

It belongs to the beta-catenin family. In terms of assembly, binds to E-cadherin at a juxtamembrane site within the cytoplasmic domain. Interacts with PDZD2. Interacts with ZBTB33. Binds to PSEN1. Interacts with ARHGEF28. Interacts (via the extreme C-terminus) with FRMPD2 (via the PDZ 2 domain). Interacts with CDK5. Interacts with CTNNB1. Interacts with GSK3A and GSK3B. Interacts with DNM2. Interacts with CCDC85B. Post-translationally, O-glycosylated. Phosphorylated by CDK5. Phosphorylated by GSK3B. Expressed in brain; highest expression is observed in fetal brain.

It localises to the nucleus. It is found in the cell junction. Its subcellular location is the adherens junction. The protein localises to the cell projection. The protein resides in the dendrite. It localises to the perikaryon. In terms of biological role, has a critical role in neuronal development, particularly in the formation and/or maintenance of dendritic spines and synapses. Involved in the regulation of Wnt signaling. It probably acts on beta-catenin turnover, facilitating beta-catenin interaction with GSK3B, phosphorylation, ubiquitination and degradation. Functions as a transcriptional activator when bound to ZBTB33. May be involved in neuronal cell adhesion and tissue morphogenesis and integrity by regulating adhesion molecules. In Homo sapiens (Human), this protein is Catenin delta-2 (CTNND2).